The sequence spans 265 residues: 3'(2'),5'-bisphosphate nucleotidase CysQ (265 aa).

Mg(2+) is bound by residues Glu-80, Asp-99, Leu-101, Asp-102, and Asp-222. Glu-80 serves as a coordination point for substrate. Substrate contacts are provided by residues 101 to 104 (LDGT) and Asp-222.

This sequence belongs to the inositol monophosphatase superfamily. CysQ family. Mg(2+) is required as a cofactor.

The protein resides in the cell inner membrane. The catalysed reaction is adenosine 3',5'-bisphosphate + H2O = AMP + phosphate. Its function is as follows. Converts adenosine-3',5'-bisphosphate (PAP) to AMP. In Buchnera aphidicola subsp. Acyrthosiphon pisum (strain APS) (Acyrthosiphon pisum symbiotic bacterium), this protein is 3'(2'),5'-bisphosphate nucleotidase CysQ.